We begin with the raw amino-acid sequence, 162 residues long: MAKVHRLMNAVLRLAAAAAAATAAVVMVTSRETTSFFGIQMEAKYSYTPSFIFFVVAYAVAAAYSLLVLAVPAGSALSRLALTTDVVLGMVLAGAVASAGAISDIAKNGNSHAGWLPVCGQIHAYCNHVMAALIAGFVALAVHFVVVMYSLHIVTDVICPCH.

Over 1–7 (MAKVHRL) the chain is Cytoplasmic. The chain crosses the membrane as a helical span at residues 8–28 (MNAVLRLAAAAAAATAAVVMV). Residues 29 to 50 (TSRETTSFFGIQMEAKYSYTPS) lie on the Extracellular side of the membrane. A helical membrane pass occupies residues 51-71 (FIFFVVAYAVAAAYSLLVLAV). The Cytoplasmic portion of the chain corresponds to 72 to 85 (PAGSALSRLALTTD). Residues 86 to 106 (VVLGMVLAGAVASAGAISDIA) traverse the membrane as a helical segment. The Extracellular portion of the chain corresponds to 107–128 (KNGNSHAGWLPVCGQIHAYCNH). A helical transmembrane segment spans residues 129–149 (VMAALIAGFVALAVHFVVVMY). Residues 150-162 (SLHIVTDVICPCH) are Cytoplasmic-facing.

This sequence belongs to the Casparian strip membrane proteins (CASP) family. As to quaternary structure, homodimer and heterodimers.

It is found in the cell membrane. Involved in cell elongation in rice through dual regulation by brassinolide and auxin. The sequence is that of CASP-like protein BLE3 (BLE3) from Oryza sativa subsp. indica (Rice).